A 148-amino-acid chain; its full sequence is Large ribosomal subunit protein uL15 (148 aa).

Basic residues predominate over residues 1-30 (MPSRLRKTRKLRGHVSHGHGRIGKHRKHPG). A disordered region spans residues 1 to 37 (MPSRLRKTRKLRGHVSHGHGRIGKHRKHPGGRGNAGG). Position 39 is a (3S)-3-hydroxyhistidine (His-39). Residues Lys-47 and Lys-55 each carry the N6-acetyllysine modification. At Ser-68 the chain carries Phosphoserine. An N6-acetyllysine modification is found at Lys-110.

This sequence belongs to the universal ribosomal protein uL15 family. In terms of assembly, component of the large ribosomal subunit. Post-translationally, hydroxylated on His-39 by MINA.

It localises to the cytoplasm. Component of the large ribosomal subunit. The ribosome is a large ribonucleoprotein complex responsible for the synthesis of proteins in the cell. In Mus musculus (Mouse), this protein is Large ribosomal subunit protein uL15 (Rpl27a).